The sequence spans 99 residues: MKIIKVTVVYALPKIQYICQVDIALGSTVKDAILESNLLNLTNDVSFHHNRIGIYNKTVHLKFKIKDGDRIEIYRNLTIDPKEWRRNNIFLSKKLKKIY.

This sequence belongs to the UPF0125 (RnfH) family.

The protein is Protein RnfH of Buchnera aphidicola subsp. Acyrthosiphon pisum (strain 5A).